The following is a 1019-amino-acid chain: TOG array regulator of axonemal microtubules protein 2 (1019 aa).

4 disordered regions span residues 28–54, 131–158, 249–311, and 991–1019; these read AGPRVLPPGSINSSLPHGEGSLQPEPR, RRLSEGLAASSRASLDPGGGPQGVPLHS, TPSR…AKKP, and SLGGSRKATDRGVAPDSKTTGSSYPFQLD. Residues 1007–1019 show a composition bias toward polar residues; the sequence is SKTTGSSYPFQLD.

It belongs to the Crescerin family.

This is TOG array regulator of axonemal microtubules protein 2 from Homo sapiens (Human).